A 507-amino-acid polypeptide reads, in one-letter code: Solute carrier family 2, facilitated glucose transporter member 6 (507 aa).

The tract at residues 1–28 (MQEPLLGAEGPDYDTFPEKPPPSPGDRA) is disordered. At 1–37 (MQEPLLGAEGPDYDTFPEKPPPSPGDRARVGTLQNKR) the chain is on the cytoplasmic side. The Dileucine internalization motif motif lies at 5-6 (LL). Serine 23 is subject to Phosphoserine. Residues 38–58 (VFLATFAAVLGNFSFGYALVY) form a helical membrane-spanning segment. At 59–81 (TSPVIPALERSLDPDLHLTKSQA) the chain is on the extracellular side. The chain crosses the membrane as a helical span at residues 82 to 102 (SWFGSVFTLGAAAGGLSAMIL). Over 103–111 (NDLLGRKLS) the chain is Cytoplasmic. Residues 112–132 (IMFSAVPSAAGYALMAGAHGL) form a helical membrane-spanning segment. The Extracellular portion of the chain corresponds to 133–140 (WMLLLGRT). The chain crosses the membrane as a helical span at residues 141–161 (LTGFAGGLTAACIPVYVSEIA). Residues 162-168 (PPGVRGA) lie on the Cytoplasmic side of the membrane. The chain crosses the membrane as a helical span at residues 169–189 (LGATPQLMAVFGSLSLYALGL). Glutamine 174 contributes to the a D-hexose binding site. Over 190–194 (LLPWR) the chain is Extracellular. The helical transmembrane segment at 195 to 215 (WLAVAGEAPVLIMILLLSFMP) threads the bilayer. Residues 216–289 (NSPRFLLSRG…LLMRLLQQLT (74 aa)) are Cytoplasmic-facing. An a D-hexose-binding site is contributed by 286–287 (QQ). Residues 290-310 (GITPILVYLQSIFDSTAVLLP) traverse the membrane as a helical segment. The Extracellular segment spans residues 311-314 (PKDD). The helical transmembrane segment at 315-335 (AAIVGAVRLLSVLIAALTMDL) threads the bilayer. The Cytoplasmic portion of the chain corresponds to 336–339 (AGRK). A helical transmembrane segment spans residues 340 to 360 (VLLFVSAAIMFAANLTLGLYI). The Extracellular portion of the chain corresponds to 361-395 (HFGPRPLSPNSTAGLESESWGDLAQPLAAPAGYLT). A glycan (N-linked (GlcNAc...) asparagine) is linked at asparagine 370. The chain crosses the membrane as a helical span at residues 396–416 (LVPLLATMLFIMGYAVGWGPI). Topologically, residues 417–435 (TWLLMSEVLPLRARGVASG) are cytoplasmic. Tryptophan 418 lines the a D-hexose pocket. Residues 436-456 (LCVLASWLTAFVLTKSFLPVV) traverse the membrane as a helical segment. Residues 457-462 (STFGLQ) are Extracellular-facing. A helical transmembrane segment spans residues 463-483 (VPFFFFAAICLVSLVFTGCCV). The Cytoplasmic segment spans residues 484-507 (PETKGRSLEQIESFFRTGRRSFLR).

It belongs to the major facilitator superfamily. Sugar transporter (TC 2.A.1.1) family. Glucose transporter subfamily. As to expression, highly expressed in brain, spleen and peripheral blood leukocytes.

Its subcellular location is the lysosome membrane. Probable sugar transporter that acts as a regulator of glycolysis in macrophages. Does not transport glucose. The polypeptide is Solute carrier family 2, facilitated glucose transporter member 6 (Homo sapiens (Human)).